The chain runs to 422 residues: Glucosylglycerol-phosphate phosphatase (422 aa).

The active-site Proton donor is D403.

Belongs to the histidine acid phosphatase family. As to quaternary structure, monomer. Interacts with GGPS.

It carries out the reaction 2-O-(alpha-D-glucopyranosyl)-sn-glycerol 3-phosphate + H2O = 2-O-(alpha-D-glucopyranosyl)glycerol + phosphate. Its function is as follows. Phosphorylates glucosylglycerol-phosphate the precursor of the osmoprotectant glucosylglycerol necessary for salt adaptation of Synechocystis. The sequence is that of Glucosylglycerol-phosphate phosphatase (stpA) from Synechocystis sp. (strain ATCC 27184 / PCC 6803 / Kazusa).